We begin with the raw amino-acid sequence, 763 residues long: Thyrotropin receptor (763 aa).

Residues 1 to 21 (MRQTPLLQLALLLSLPRSLGG) form the signal peptide. Residues 22–412 (KGCPSPPCEC…EFNPCEDIMG (391 aa)) are Extracellular-facing. The cysteines at positions 31 and 41 are disulfide-linked. 2 N-linked (GlcNAc...) asparagine glycosylation sites follow: N77 and N99. 7 LRR repeats span residues 100 to 124 (LSKM…ALKE), 125 to 150 (LPLL…VYST), 151 to 174 (DVFF…AFQG), 176 to 199 (CNET…AFNG), 201 to 223 (KLDA…AFGG), 225 to 248 (YSGP…GLEH), and 264 to 288 (PLTL…AFKN). N-linked (GlcNAc...) asparagine glycosylation is found at N177 and N198. The N-linked (GlcNAc...) asparagine glycan is linked to N302. The residue at position 384 (Y384) is a Sulfotyrosine. The chain crosses the membrane as a helical span at residues 413–440 (YKFLRIVVWFVSLLALLGNVFVLIILLT). Over 441 to 449 (SHYKLTVPR) the chain is Cytoplasmic. The helical transmembrane segment at 450-472 (FLMCNLAFADFCMGMYLLLIASV) threads the bilayer. At 473 to 493 (DLYTHSEYYNHAIDWQTGPGC) the chain is on the extracellular side. C493 and C568 are joined by a disulfide. The chain crosses the membrane as a helical span at residues 494–516 (NAAGFFTVFASELSVYTLTVITL). The Cytoplasmic portion of the chain corresponds to 517–536 (ERWYAITFAMRLDRKMRLRH). A helical membrane pass occupies residues 537–559 (AYAIMVGGWVCCFLLALLPLVGI). At 560–579 (SSYAKVSICLPMDTETPLAL) the chain is on the extracellular side. The chain crosses the membrane as a helical span at residues 580 to 601 (AYIILVLLLNIVAFIIVCSCYV). Topologically, residues 602-624 (KIYITVRNPQYNTGDKDTKIAKR) are cytoplasmic. A helical membrane pass occupies residues 625 to 648 (MAVLIFTDFMCMAPISFYALSALM). Residues 649-659 (NKPLITVTNSK) are Extracellular-facing. The chain crosses the membrane as a helical span at residues 660–681 (ILLVLFYPLNSCANPFLYAIFT). Residues 682-763 (KTFQRDVFIL…ISKEYNQTVL (82 aa)) lie on the Cytoplasmic side of the membrane. Residues 761-763 (TVL) carry the PDZ-binding motif.

It belongs to the G-protein coupled receptor 1 family. FSH/LSH/TSH subfamily. Interacts with heterodimer GPHA2:GPHB5; this interaction stimulates cAMP production. Interacts (via the PDZ-binding motif) with SCRIB; regulates TSHR trafficking and function. Post-translationally, glycosylated. In terms of processing, sulfated. Sulfation on Tyr-384 plays a role in thyrotropin receptor binding and activation.

The protein resides in the cell membrane. It localises to the basolateral cell membrane. In terms of biological role, receptor for the thyroid-stimulating hormone (TSH) or thyrotropin. Also acts as a receptor for the heterodimeric glycoprotein hormone (GPHA2:GPHB5) or thyrostimulin. The activity of this receptor is mediated by G proteins which activate adenylate cyclase. Plays a central role in controlling thyroid cell metabolism. The chain is Thyrotropin receptor (TSHR) from Felis catus (Cat).